The primary structure comprises 116 residues: Ribosome-binding factor A (116 aa).

The protein belongs to the RbfA family. In terms of assembly, monomer. Binds 30S ribosomal subunits, but not 50S ribosomal subunits or 70S ribosomes.

Its subcellular location is the cytoplasm. One of several proteins that assist in the late maturation steps of the functional core of the 30S ribosomal subunit. Associates with free 30S ribosomal subunits (but not with 30S subunits that are part of 70S ribosomes or polysomes). Required for efficient processing of 16S rRNA. May interact with the 5'-terminal helix region of 16S rRNA. The protein is Ribosome-binding factor A of Streptococcus equi subsp. zooepidemicus (strain H70).